We begin with the raw amino-acid sequence, 113 residues long: Non-specific lipid-transfer protein (113 aa).

Residues 1-24 (AQVMLMAVALVLMLAAVPRAAVAI) form the signal peptide. Disulfide bonds link Cys-26-Cys-73, Cys-36-Cys-50, Cys-51-Cys-96, and Cys-71-Cys-110. Residue Asp-30 is the site of Cis-14-hydroxy-10,13-dioxo-7-heptadecenoic acid aspartate ester attachment.

It belongs to the plant LTP family.

Functionally, plant non-specific lipid-transfer proteins transfer phospholipids as well as galactolipids across membranes. May play a role in wax or cutin deposition in the cell walls of expanding epidermal cells and certain secretory tissues. This Triticum aestivum (Wheat) protein is Non-specific lipid-transfer protein.